The primary structure comprises 103 residues: N(4)-acetylcytidine amidohydrolase (103 aa).

One can recognise an ASCH domain in the interval 6–100 (ITFFQRFQND…NQMQFYVIDF (95 aa)). K21 (proton acceptor) is an active-site residue. T24 serves as the catalytic Nucleophile. The active-site Proton donor is the E74.

The protein belongs to the N(4)-acetylcytidine amidohydrolase family.

The catalysed reaction is N(4)-acetylcytidine + H2O = cytidine + acetate + H(+). It carries out the reaction N(4)-acetyl-2'-deoxycytidine + H2O = 2'-deoxycytidine + acetate + H(+). The enzyme catalyses N(4)-acetylcytosine + H2O = cytosine + acetate + H(+). Catalyzes the hydrolysis of N(4)-acetylcytidine (ac4C). The polypeptide is N(4)-acetylcytidine amidohydrolase (yqfB) (Salmonella arizonae (strain ATCC BAA-731 / CDC346-86 / RSK2980)).